A 545-amino-acid chain; its full sequence is Alpha-galactosidase A (545 aa).

Positions Met-1–Gly-31 are cleaved as a signal peptide. Cys-54 and Cys-86 are disulfide-bonded. Residues Asn-57, Asn-95, Asn-101, and Asn-131 are each glycosylated (N-linked (GlcNAc...) asparagine). Cys-134 and Cys-164 are oxidised to a cystine. Asp-162 functions as the Nucleophile in the catalytic mechanism. Asn-211 carries an N-linked (GlcNAc...) asparagine glycan. Catalysis depends on Asp-220, which acts as the Proton donor. N-linked (GlcNAc...) asparagine glycans are attached at residues Asn-363 and Asn-444. A Ricin B-type lectin domain is found at Cys-421–Thr-518. Cystine bridges form between Cys-438–Cys-452 and Cys-477–Cys-490.

It belongs to the glycosyl hydrolase 27 family. A C-terminal Ser/Thr-rich region may provide possible sites for O-glycosylation.

It localises to the secreted. The enzyme catalyses Hydrolysis of terminal, non-reducing alpha-D-galactose residues in alpha-D-galactosides, including galactose oligosaccharides, galactomannans and galactolipids.. In terms of biological role, hydrolyzes a variety of simple alpha-D-galactoside as well as more complex molecules such as oligosaccharides and polysaccharides. The sequence is that of Alpha-galactosidase A (aglA) from Aspergillus niger.